The following is a 612-amino-acid chain: MSAELIAVYKDEQIIDLESAKVLGLSDGIKALNGTEPIYFDDSPLALEVIRHSCAHLLAQSLKALYPDAKFFVGPVVEEGFYYDFKTASKISEEDLPKIEAKMKEFAKLKLAITKETLTREQALERFKGDELKHAVMSKISGDAFGVYQQGEFEDLCKGPHLPNTRFLNHFKLTKLAGAYLGGDENNEMLIRIYGIAFATKEGLKDYLFQIEEAKKRDHRKLGVELGLFSFDDEIGAGLPLWLPKGARLRKRIEDLLSQALLLRGYEPVKGPEILKSDVWKISGHYDNYKENMYFTTIDEQEYGIKPMNCVGHIKVYQSALHSYRDLPLRFYEYGVVHRHEKSGVLHGLLRVREFTQDDAHIFCSFEQIQSEVSAILDFTHKIMQAFDFSYEMELSTRPAKSIGDDEVWEKATSALKEALKEHRIDYKIDEGGGAFYGPKIDIKITDALKRKWQCGTIQVDMNLPERFKLAFTNERNHAEQPVMIHRAILGSFERFIAILSEHFGGNFPFFVAPTQIALIPINEEHHVFALKLKEVLKKRDIFVEVLDKNDSLNKKVRLAEKQKIPMILVLGNEEVETEILSIRDREKQAQYKMPLKEFLNMVESKMQEVSF.

Residues 218 to 509 (DHRKLGVELG…LSEHFGGNFP (292 aa)) are catalytic. 3 residues coordinate Zn(2+): cysteine 310, histidine 361, and histidine 486.

This sequence belongs to the class-II aminoacyl-tRNA synthetase family. As to quaternary structure, homodimer. Requires Zn(2+) as cofactor.

Its subcellular location is the cytoplasm. It carries out the reaction tRNA(Thr) + L-threonine + ATP = L-threonyl-tRNA(Thr) + AMP + diphosphate + H(+). Functionally, catalyzes the attachment of threonine to tRNA(Thr) in a two-step reaction: L-threonine is first activated by ATP to form Thr-AMP and then transferred to the acceptor end of tRNA(Thr). Also edits incorrectly charged L-seryl-tRNA(Thr). The chain is Threonine--tRNA ligase from Helicobacter pylori (strain P12).